The following is a 444-amino-acid chain: MSKTYHFIGIKGSGMSALALMLYQMGHKVQGSDVEKYYFTQRGLEQAGITILPFDEKNLDGDMEIIAGNAFRPDNNVEIVYADQNGISYKRYHEFLGSFMRDFVSMGVAGAHGKTSTTGMLSHVLSHITDTSFLIGDGTGRGSANAKYFVFESDEYERHFMPYHPEYSIITNIDFDHPDYFTSLEDVFNAFNDYAKQITKGLFVYGEDAELRKITSDAPIYYYGFEAEGNDFVASDLLRSTTGSTFTVHFRGQNLGQFHIPTFGRHNIMNATAVIGLLYTAGFDLNLVREHLKTFSGVKRRFTEKIVNDTVIIDDFAHHPTEIIATLDAARQKYPSKEIVAVFQPHTFTRTIALLDDFAHALNQADAVYLAQIYGSAREVDHGDVKVEDLANKINKKHQVITVENVSPLLDHDNAVYVFMGAGDIQTYEYSFERLLSNLTSNVQ.

Residue 110–116 participates in ATP binding; it reads GAHGKTS.

This sequence belongs to the MurCDEF family.

The protein localises to the cytoplasm. The catalysed reaction is UDP-N-acetyl-alpha-D-muramate + L-alanine + ATP = UDP-N-acetyl-alpha-D-muramoyl-L-alanine + ADP + phosphate + H(+). Its pathway is cell wall biogenesis; peptidoglycan biosynthesis. Functionally, cell wall formation. This Streptococcus pneumoniae (strain ATCC 700669 / Spain 23F-1) protein is UDP-N-acetylmuramate--L-alanine ligase.